The chain runs to 501 residues: Aldehyde dehydrogenase mpl4 (501 aa).

231–236 (GSTASG) is a binding site for NAD(+). Active-site residues include E253 and C287.

Belongs to the aldehyde dehydrogenase family.

It carries out the reaction an aldehyde + NAD(+) + H2O = a carboxylate + NADH + 2 H(+). It participates in mycotoxin biosynthesis. Its function is as follows. Aldehyde dehydrogenase; part of the gene cluster that mediates the biosynthesis of the mycotoxin citrinin, a hepato-nephrotoxic compound to humans due to inhibition of respiration complex III. The pathway begins with the synthesis of a keto-aldehyde intermediate by the citrinin PKS (pksCT) from successive condensations of 4 malonyl-CoA units, presumably with a simple acetyl-CoA starter unit. Release of the keto-aldehyde intermediate is consistent with the presence of the C-terminal reductive release domain. Mp11 collaborates with pksCT by catalyzing the hydrolysis of ACP-bound acyl intermediates to free the ACP from stalled intermediates. Mpl2 then catalyzes the oxidation of the C-12 methyl of the ketone intermediate to an alcohol intermediate which is further oxidized by the oxidoreductase mpl7 to produce a bisaldehyde intermediate. The fourth catalytic step is catalyzed by the mpl4 aldehyde dehydrogenase. The final transformation is the reduction of C-3 by mpl6 to provide the chemically stable citrinin nucleus. This is Aldehyde dehydrogenase mpl4 from Monascus purpureus (Red mold).